Here is a 120-residue protein sequence, read N- to C-terminus: Putative defensin-like protein 179 (120 aa).

The first 27 residues, 1–27 (MERTSTSLLFLLSLLIIFASAVNQIRA), serve as a signal peptide directing secretion. 7 cysteine pairs are disulfide-bonded: Cys37–Cys56, Cys40–Cys63, Cys44–Cys65, Cys74–Cys120, Cys85–Cys105, Cys90–Cys114, and Cys94–Cys116.

Belongs to the DEFL family.

The protein resides in the secreted. This chain is Putative defensin-like protein 179 (LCR57), found in Arabidopsis thaliana (Mouse-ear cress).